Here is a 347-residue protein sequence, read N- to C-terminus: UDP-N-acetylenolpyruvoylglucosamine reductase (347 aa).

Residues 24 to 195 (FDARARVAAR…VAVTFRLPKA (172 aa)) form the FAD-binding PCMH-type domain. Residue R171 is part of the active site. S247 serves as the catalytic Proton donor. Residue E343 is part of the active site.

It belongs to the MurB family. It depends on FAD as a cofactor.

The protein localises to the cytoplasm. It carries out the reaction UDP-N-acetyl-alpha-D-muramate + NADP(+) = UDP-N-acetyl-3-O-(1-carboxyvinyl)-alpha-D-glucosamine + NADPH + H(+). It participates in cell wall biogenesis; peptidoglycan biosynthesis. In terms of biological role, cell wall formation. This Burkholderia pseudomallei (strain 668) protein is UDP-N-acetylenolpyruvoylglucosamine reductase.